The following is a 346-amino-acid chain: Holliday junction branch migration complex subunit RuvB (346 aa).

The segment at 1–182 (MSEPARLISP…FGIPVRLTFY (182 aa)) is large ATPase domain (RuvB-L). ATP is bound by residues L21, R22, G63, K66, T67, T68, 129 to 131 (EDY), R172, Y182, and R219. T67 contacts Mg(2+). The small ATPAse domain (RuvB-S) stretch occupies residues 183–253 (TVEELELIVR…IADEALTRLL (71 aa)). Residues 256 to 346 (NVGFDQLDKR…AQFRLFQEDD (91 aa)) are head domain (RuvB-H). Residues R292, R311, and R316 each coordinate DNA.

Belongs to the RuvB family. In terms of assembly, homohexamer. Forms an RuvA(8)-RuvB(12)-Holliday junction (HJ) complex. HJ DNA is sandwiched between 2 RuvA tetramers; dsDNA enters through RuvA and exits via RuvB. An RuvB hexamer assembles on each DNA strand where it exits the tetramer. Each RuvB hexamer is contacted by two RuvA subunits (via domain III) on 2 adjacent RuvB subunits; this complex drives branch migration. In the full resolvosome a probable DNA-RuvA(4)-RuvB(12)-RuvC(2) complex forms which resolves the HJ.

The protein localises to the cytoplasm. The catalysed reaction is ATP + H2O = ADP + phosphate + H(+). Functionally, the RuvA-RuvB-RuvC complex processes Holliday junction (HJ) DNA during genetic recombination and DNA repair, while the RuvA-RuvB complex plays an important role in the rescue of blocked DNA replication forks via replication fork reversal (RFR). RuvA specifically binds to HJ cruciform DNA, conferring on it an open structure. The RuvB hexamer acts as an ATP-dependent pump, pulling dsDNA into and through the RuvAB complex. RuvB forms 2 homohexamers on either side of HJ DNA bound by 1 or 2 RuvA tetramers; 4 subunits per hexamer contact DNA at a time. Coordinated motions by a converter formed by DNA-disengaged RuvB subunits stimulates ATP hydrolysis and nucleotide exchange. Immobilization of the converter enables RuvB to convert the ATP-contained energy into a lever motion, pulling 2 nucleotides of DNA out of the RuvA tetramer per ATP hydrolyzed, thus driving DNA branch migration. The RuvB motors rotate together with the DNA substrate, which together with the progressing nucleotide cycle form the mechanistic basis for DNA recombination by continuous HJ branch migration. Branch migration allows RuvC to scan DNA until it finds its consensus sequence, where it cleaves and resolves cruciform DNA. In Rhizobium etli (strain ATCC 51251 / DSM 11541 / JCM 21823 / NBRC 15573 / CFN 42), this protein is Holliday junction branch migration complex subunit RuvB.